The primary structure comprises 321 residues: Lipoyl synthase (321 aa).

7 residues coordinate [4Fe-4S] cluster: cysteine 68, cysteine 73, cysteine 79, cysteine 94, cysteine 98, cysteine 101, and serine 308. The Radical SAM core domain maps to 80-297 (FNHGTATFMI…KEVALELGFT (218 aa)).

It belongs to the radical SAM superfamily. Lipoyl synthase family. It depends on [4Fe-4S] cluster as a cofactor.

The protein resides in the cytoplasm. It carries out the reaction [[Fe-S] cluster scaffold protein carrying a second [4Fe-4S](2+) cluster] + N(6)-octanoyl-L-lysyl-[protein] + 2 oxidized [2Fe-2S]-[ferredoxin] + 2 S-adenosyl-L-methionine + 4 H(+) = [[Fe-S] cluster scaffold protein] + N(6)-[(R)-dihydrolipoyl]-L-lysyl-[protein] + 4 Fe(3+) + 2 hydrogen sulfide + 2 5'-deoxyadenosine + 2 L-methionine + 2 reduced [2Fe-2S]-[ferredoxin]. It participates in protein modification; protein lipoylation via endogenous pathway; protein N(6)-(lipoyl)lysine from octanoyl-[acyl-carrier-protein]: step 2/2. Catalyzes the radical-mediated insertion of two sulfur atoms into the C-6 and C-8 positions of the octanoyl moiety bound to the lipoyl domains of lipoate-dependent enzymes, thereby converting the octanoylated domains into lipoylated derivatives. This chain is Lipoyl synthase, found in Vibrio cholerae serotype O1 (strain ATCC 39315 / El Tor Inaba N16961).